Reading from the N-terminus, the 252-residue chain is Flap endonuclease Xni (252 aa).

Residue aspartate 105 participates in Mg(2+) binding. A 5'-3' exonuclease domain is found at 162 to 251 (EQYQFLDFIA…EINLKQFRVK (90 aa)). Leucine 172, alanine 173, proline 181, isoleucine 183, and isoleucine 186 together coordinate K(+). The segment at 185–190 (GIGPKS) is interaction with DNA.

It belongs to the Xni family. It depends on Mg(2+) as a cofactor. K(+) serves as cofactor.

Has flap endonuclease activity. During DNA replication, flap endonucleases cleave the 5'-overhanging flap structure that is generated by displacement synthesis when DNA polymerase encounters the 5'-end of a downstream Okazaki fragment. In Shewanella denitrificans (strain OS217 / ATCC BAA-1090 / DSM 15013), this protein is Flap endonuclease Xni.